Reading from the N-terminus, the 429-residue chain is Mannose-6-phosphate isomerase (429 aa).

Zn(2+) contacts are provided by Gln-109, His-111, Glu-136, and His-281. Arg-300 is a catalytic residue.

The protein belongs to the mannose-6-phosphate isomerase type 1 family. Zn(2+) is required as a cofactor.

The protein resides in the cytoplasm. It carries out the reaction D-mannose 6-phosphate = D-fructose 6-phosphate. Its pathway is nucleotide-sugar biosynthesis; GDP-alpha-D-mannose biosynthesis; alpha-D-mannose 1-phosphate from D-fructose 6-phosphate: step 1/2. In terms of biological role, involved in the synthesis of the GDP-mannose and dolichol-phosphate-mannose required for a number of critical mannosyl transfer reactions. This is Mannose-6-phosphate isomerase (PMI1) from Eremothecium gossypii (strain ATCC 10895 / CBS 109.51 / FGSC 9923 / NRRL Y-1056) (Yeast).